The following is a 482-amino-acid chain: Proline--tRNA ligase (482 aa).

The protein belongs to the class-II aminoacyl-tRNA synthetase family. ProS type 3 subfamily. As to quaternary structure, homodimer.

The protein localises to the cytoplasm. It carries out the reaction tRNA(Pro) + L-proline + ATP = L-prolyl-tRNA(Pro) + AMP + diphosphate. Functionally, catalyzes the attachment of proline to tRNA(Pro) in a two-step reaction: proline is first activated by ATP to form Pro-AMP and then transferred to the acceptor end of tRNA(Pro). This is Proline--tRNA ligase from Thermofilum pendens (strain DSM 2475 / Hrk 5).